The primary structure comprises 133 residues: Transmembrane protein 60 (133 aa).

A run of 4 helical transmembrane segments spans residues 5–25, 35–55, 78–98, and 110–130; these read LAQR…MLVL, WFLI…MLIV, AWYL…CAKL, and FIPL…NVFF.

The protein resides in the membrane. This is Transmembrane protein 60 (Tmem60) from Mus musculus (Mouse).